A 475-amino-acid polypeptide reads, in one-letter code: ATP synthase subunit beta (475 aa).

Position 155 to 162 (155 to 162) interacts with ATP; that stretch reads GGAGVGKT.

It belongs to the ATPase alpha/beta chains family. As to quaternary structure, F-type ATPases have 2 components, CF(1) - the catalytic core - and CF(0) - the membrane proton channel. CF(1) has five subunits: alpha(3), beta(3), gamma(1), delta(1), epsilon(1). CF(0) has three main subunits: a(1), b(2) and c(9-12). The alpha and beta chains form an alternating ring which encloses part of the gamma chain. CF(1) is attached to CF(0) by a central stalk formed by the gamma and epsilon chains, while a peripheral stalk is formed by the delta and b chains.

Its subcellular location is the cell inner membrane. The enzyme catalyses ATP + H2O + 4 H(+)(in) = ADP + phosphate + 5 H(+)(out). Its function is as follows. Produces ATP from ADP in the presence of a proton gradient across the membrane. The catalytic sites are hosted primarily by the beta subunits. The polypeptide is ATP synthase subunit beta (Rhizobium etli (strain ATCC 51251 / DSM 11541 / JCM 21823 / NBRC 15573 / CFN 42)).